Here is a 347-residue protein sequence, read N- to C-terminus: tRNA dimethylallyltransferase (347 aa).

20 to 27 (GPTASGKT) is a binding site for ATP. Residue 22–27 (TASGKT) coordinates substrate. 3 interaction with substrate tRNA regions span residues 45-48 (DSAM), 169-173 (QRLMR), and 275-280 (RCVGYR).

This sequence belongs to the IPP transferase family. Monomer. Mg(2+) serves as cofactor.

The catalysed reaction is adenosine(37) in tRNA + dimethylallyl diphosphate = N(6)-dimethylallyladenosine(37) in tRNA + diphosphate. Catalyzes the transfer of a dimethylallyl group onto the adenine at position 37 in tRNAs that read codons beginning with uridine, leading to the formation of N6-(dimethylallyl)adenosine (i(6)A). The protein is tRNA dimethylallyltransferase of Marinobacter nauticus (strain ATCC 700491 / DSM 11845 / VT8) (Marinobacter aquaeolei).